The sequence spans 70 residues: MLINLYRYCISPFIPARCRYYPTCSEYALEALKTHGILKGLYLTTRRLLRCHPLSKRDYYDLVPCKNKKG.

The protein belongs to the UPF0161 family.

Its subcellular location is the cell inner membrane. In terms of biological role, could be involved in insertion of integral membrane proteins into the membrane. In Francisella tularensis subsp. tularensis (strain SCHU S4 / Schu 4), this protein is Putative membrane protein insertion efficiency factor.